Reading from the N-terminus, the 370-residue chain is Gibberellin 2-beta-dioxygenase 2 (370 aa).

Positions 186-306 (DNDSLIRINH…RLSTIYFAAP (121 aa)) constitute a Fe2OG dioxygenase domain. Y196 serves as a coordination point for 2-oxoglutarate. Positions 224, 226, and 287 each coordinate Fe cation. 2-oxoglutarate is bound by residues R297 and S299.

Belongs to the iron/ascorbate-dependent oxidoreductase family. GA2OX subfamily. Requires Fe(2+) as cofactor.

The catalysed reaction is gibberellin A1 + 2-oxoglutarate + O2 = gibberellin A8 + succinate + CO2. Catalyzes the 2-beta-hydroxylation of several biologically active gibberellins, leading to the homeostatic regulation of their endogenous level. Catabolism of gibberellins (GAs) plays a central role in plant development. This Oryza sativa subsp. japonica (Rice) protein is Gibberellin 2-beta-dioxygenase 2.